The sequence spans 282 residues: Homeobox protein CDX-4 (282 aa).

Disordered regions lie at residues 13–36 (MYPG…GGSG) and 98–156 (MNDM…SPYA). The span at 20 to 29 (SPGGSSTAGV) shows a compositional bias: low complexity. Polar residues-rich tracts occupy residues 110-124 (DYST…SNGG) and 133-148 (SLVS…TSPS). The segment at residues 171–230 (KEKYRVVYTDHQRLELEKEFHCNRYITIRRKSELAVNLGLSERQVKIWFQNRRAKERKMI) is a DNA-binding region (homeobox).

It belongs to the Caudal homeobox family.

It is found in the nucleus. The protein is Homeobox protein CDX-4 (Cdx4) of Mus musculus (Mouse).